The chain runs to 90 residues: DNA-directed RNA polymerase subunit omega (90 aa).

A disordered region spans residues 69-90 (RQEQQEQEAAELAAVSSIAHNR).

The protein belongs to the RNA polymerase subunit omega family. As to quaternary structure, the RNAP catalytic core consists of 2 alpha, 1 beta, 1 beta' and 1 omega subunit. When a sigma factor is associated with the core the holoenzyme is formed, which can initiate transcription.

The enzyme catalyses RNA(n) + a ribonucleoside 5'-triphosphate = RNA(n+1) + diphosphate. Functionally, promotes RNA polymerase assembly. Latches the N- and C-terminal regions of the beta' subunit thereby facilitating its interaction with the beta and alpha subunits. This chain is DNA-directed RNA polymerase subunit omega, found in Vibrio parahaemolyticus serotype O3:K6 (strain RIMD 2210633).